The following is a 285-amino-acid chain: 4-hydroxybenzoate octaprenyltransferase (285 aa).

The next 7 membrane-spanning stretches (helical) occupy residues 33–53, 93–113, 134–154, 166–186, 209–229, 233–253, and 265–285; these read FLAA…LGVV, LILF…MNTL, ITYL…PMAY, WLLF…YAMV, LMIG…GIQL, SLYN…QWLI, and FLNN…SVLI.

This sequence belongs to the UbiA prenyltransferase family. Mg(2+) is required as a cofactor.

The protein localises to the cell inner membrane. The catalysed reaction is all-trans-octaprenyl diphosphate + 4-hydroxybenzoate = 4-hydroxy-3-(all-trans-octaprenyl)benzoate + diphosphate. The protein operates within cofactor biosynthesis; ubiquinone biosynthesis. Catalyzes the prenylation of para-hydroxybenzoate (PHB) with an all-trans polyprenyl group. Mediates the second step in the final reaction sequence of ubiquinone-8 (UQ-8) biosynthesis, which is the condensation of the polyisoprenoid side chain with PHB, generating the first membrane-bound Q intermediate 3-octaprenyl-4-hydroxybenzoate. The sequence is that of 4-hydroxybenzoate octaprenyltransferase from Aliivibrio salmonicida (strain LFI1238) (Vibrio salmonicida (strain LFI1238)).